Consider the following 112-residue polypeptide: Transcriptional regulator WhiD (112 aa).

Residues 22 to 86 form the 4Fe-4S Wbl-type domain; it reads ACRGVDSSLF…GGLTEDEREE (65 aa). Positions 23, 53, 56, and 62 each coordinate [4Fe-4S] cluster.

Belongs to the WhiB family. In terms of assembly, the 4Fe-4S form is a monomer; upon oxidation forms a disulfide-bonded homodimer. It depends on [4Fe-4S] cluster as a cofactor. Can be nitrosylated by NO, 8 NO react per cluster. These complexes are quite stable under anaerobic conditions, but degrade slowly aerobically. Post-translationally, upon Fe-S cluster removal intramolecular disulfide bonds are formed.

The protein resides in the cytoplasm. Acts as a transcriptional regulator. Probably redox-responsive. The apo- but not holo-form probably binds DNA. Plays a positive role in prespore maturation and the initiation of sporulation septation. The sequence is that of Transcriptional regulator WhiD (whiD) from Streptomyces coelicolor (strain ATCC BAA-471 / A3(2) / M145).